Reading from the N-terminus, the 243-residue chain is uncharacterized protein (243 aa).

The helical transmembrane segment at 55 to 75 (IILIILLTIFMVISTLVIAFV) threads the bilayer.

The protein localises to the membrane. This is an uncharacterized protein from Rickettsia prowazekii (strain Madrid E).